The primary structure comprises 401 residues: Riboflavin biosynthesis protein RibBA (401 aa).

A DHBP synthase region spans residues 1–203 (MTDFQFSKVE…IQQLQEYRRK (203 aa)). D-ribulose 5-phosphate contacts are provided by residues 30-31 (RE), Asp35, 142-146 (RNGHT), and Glu166. Residue Glu31 coordinates Mg(2+). His145 serves as a coordination point for Mg(2+). Positions 204–401 (HDSLVKQISV…QIKMGHMFNF (198 aa)) are GTP cyclohydrolase II. 254 to 258 (RIHSE) is a GTP binding site. Zn(2+) is bound by residues Cys259, Cys270, and Cys272. Residues Gln275, 297 to 299 (EGR), and Thr319 each bind GTP. Catalysis depends on Asp331, which acts as the Proton acceptor; for GTP cyclohydrolase activity. Arg333 functions as the Nucleophile; for GTP cyclohydrolase activity in the catalytic mechanism. Residues Thr354 and Lys359 each coordinate GTP.

It in the N-terminal section; belongs to the DHBP synthase family. In the C-terminal section; belongs to the GTP cyclohydrolase II family. It depends on Mg(2+) as a cofactor. Requires Mn(2+) as cofactor. Zn(2+) is required as a cofactor.

It carries out the reaction D-ribulose 5-phosphate = (2S)-2-hydroxy-3-oxobutyl phosphate + formate + H(+). It catalyses the reaction GTP + 4 H2O = 2,5-diamino-6-hydroxy-4-(5-phosphoribosylamino)-pyrimidine + formate + 2 phosphate + 3 H(+). Its pathway is cofactor biosynthesis; riboflavin biosynthesis; 2-hydroxy-3-oxobutyl phosphate from D-ribulose 5-phosphate: step 1/1. It participates in cofactor biosynthesis; riboflavin biosynthesis; 5-amino-6-(D-ribitylamino)uracil from GTP: step 1/4. Its function is as follows. Catalyzes the conversion of D-ribulose 5-phosphate to formate and 3,4-dihydroxy-2-butanone 4-phosphate. In terms of biological role, catalyzes the conversion of GTP to 2,5-diamino-6-ribosylamino-4(3H)-pyrimidinone 5'-phosphate (DARP), formate and pyrophosphate. The sequence is that of Riboflavin biosynthesis protein RibBA from Actinobacillus pleuropneumoniae serotype 5b (strain L20).